A 170-amino-acid polypeptide reads, in one-letter code: MAPKKAKRRAAAEGGSSNVFSMFDQTQIQEFKEAFTVIDQNRDGIIDKEDLRDTFAAMGRLNVKNEELDAMMKEASGPINFTVFLTMFGEKLKGADPEDVITGAFKVLDPEGKGTIKKQFLEELLITQCDRFSQEEIKNMWAAFSPDVGGNVDYKNICYVITHGDAKDQE.

A2 carries the n,N,N-trimethylalanine modification. Residues S16 and S17 each carry the phosphoserine modification. A phosphothreonine mark is found at T26 and T36. In terms of domain architecture, EF-hand 1 spans T26–L61. 4 residues coordinate Ca(2+): D39, N41, D43, and D50. Residue S76 is modified to Phosphoserine. EF-hand domains lie at D96–R131 and F132–K167. T102 is subject to Phosphothreonine.

As to quaternary structure, myosin is a hexamer of 2 heavy chains and 4 light chains.

The protein is Myosin regulatory light chain 2, skeletal muscle isoform type 1 of Oryctolagus cuniculus (Rabbit).